Consider the following 362-residue polypeptide: Heme A synthase (362 aa).

Transmembrane regions (helical) follow at residues 12-32, 102-122, 128-148, 159-179, and 198-218; these read AVRIWLAIIAGLIAVMVLVGG, VIGAAFLLPFLWFLWRGDLGG, LWIIFGLGALQGAVGWWMVAS, VRLATHLVLALLIFAGIVWTL, and AAVLLGLTFVQLYLGALVAGL. Histidine 262 is a heme binding site. 3 consecutive transmembrane segments (helical) span residues 264 to 281, 289 to 309, and 312 to 332; these read MLAYALWALAVLHAIDAW, GALALAVAITLQAALGIVTLL, and VPIGLGLAHQAMAILVLTLAV. A heme-binding site is contributed by histidine 320.

This sequence belongs to the COX15/CtaA family. Type 2 subfamily. As to quaternary structure, interacts with CtaB. Requires heme b as cofactor.

Its subcellular location is the cell membrane. The enzyme catalyses Fe(II)-heme o + 2 A + H2O = Fe(II)-heme a + 2 AH2. The protein operates within porphyrin-containing compound metabolism; heme A biosynthesis; heme A from heme O: step 1/1. In terms of biological role, catalyzes the conversion of heme O to heme A by two successive hydroxylations of the methyl group at C8. The first hydroxylation forms heme I, the second hydroxylation results in an unstable dihydroxymethyl group, which spontaneously dehydrates, resulting in the formyl group of heme A. This chain is Heme A synthase, found in Rhodopseudomonas palustris (strain BisB18).